The primary structure comprises 358 residues: Alanine racemase (358 aa).

Residue Lys-34 is the Proton acceptor; specific for D-alanine of the active site. The residue at position 34 (Lys-34) is an N6-(pyridoxal phosphate)lysine. Arg-130 serves as a coordination point for substrate. The active-site Proton acceptor; specific for L-alanine is Tyr-254. Met-302 lines the substrate pocket.

The protein belongs to the alanine racemase family. The cofactor is pyridoxal 5'-phosphate.

It carries out the reaction L-alanine = D-alanine. It functions in the pathway amino-acid biosynthesis; D-alanine biosynthesis; D-alanine from L-alanine: step 1/1. In terms of biological role, catalyzes the interconversion of L-alanine and D-alanine. May also act on other amino acids. The sequence is that of Alanine racemase (alr) from Actinobacillus succinogenes (strain ATCC 55618 / DSM 22257 / CCUG 43843 / 130Z).